Consider the following 250-residue polypeptide: Imidazole glycerol phosphate synthase subunit HisF (250 aa).

Catalysis depends on residues Asp-11 and Asp-130.

This sequence belongs to the HisA/HisF family. As to quaternary structure, heterodimer of HisH and HisF.

It is found in the cytoplasm. The enzyme catalyses 5-[(5-phospho-1-deoxy-D-ribulos-1-ylimino)methylamino]-1-(5-phospho-beta-D-ribosyl)imidazole-4-carboxamide + L-glutamine = D-erythro-1-(imidazol-4-yl)glycerol 3-phosphate + 5-amino-1-(5-phospho-beta-D-ribosyl)imidazole-4-carboxamide + L-glutamate + H(+). It participates in amino-acid biosynthesis; L-histidine biosynthesis; L-histidine from 5-phospho-alpha-D-ribose 1-diphosphate: step 5/9. In terms of biological role, IGPS catalyzes the conversion of PRFAR and glutamine to IGP, AICAR and glutamate. The HisF subunit catalyzes the cyclization activity that produces IGP and AICAR from PRFAR using the ammonia provided by the HisH subunit. The polypeptide is Imidazole glycerol phosphate synthase subunit HisF (Bacteroides fragilis (strain YCH46)).